Consider the following 404-residue polypeptide: Cysteine desulfurase IscS (404 aa).

Pyridoxal 5'-phosphate-binding positions include 75-76, Asn-155, Gln-183, and 203-205; these read AT and SGH. N6-(pyridoxal phosphate)lysine is present on Lys-206. Thr-243 lines the pyridoxal 5'-phosphate pocket. The active-site Cysteine persulfide intermediate is Cys-328. Cys-328 serves as a coordination point for [2Fe-2S] cluster.

It belongs to the class-V pyridoxal-phosphate-dependent aminotransferase family. NifS/IscS subfamily. In terms of assembly, homodimer. Forms a heterotetramer with IscU, interacts with other sulfur acceptors. Pyridoxal 5'-phosphate is required as a cofactor.

It is found in the cytoplasm. It catalyses the reaction (sulfur carrier)-H + L-cysteine = (sulfur carrier)-SH + L-alanine. Its pathway is cofactor biosynthesis; iron-sulfur cluster biosynthesis. Functionally, master enzyme that delivers sulfur to a number of partners involved in Fe-S cluster assembly, tRNA modification or cofactor biosynthesis. Catalyzes the removal of elemental sulfur and selenium atoms from cysteine and selenocysteine to produce alanine. Functions as a sulfur delivery protein for Fe-S cluster synthesis onto IscU, an Fe-S scaffold assembly protein, as well as other S acceptor proteins. Also functions as a selenium delivery protein in the pathway for the biosynthesis of selenophosphate. The polypeptide is Cysteine desulfurase IscS (Salmonella arizonae (strain ATCC BAA-731 / CDC346-86 / RSK2980)).